Here is a 38-residue protein sequence, read N- to C-terminus: Large ribosomal subunit protein bL36 (38 aa).

Belongs to the bacterial ribosomal protein bL36 family.

The polypeptide is Large ribosomal subunit protein bL36 (Cellvibrio japonicus (strain Ueda107) (Pseudomonas fluorescens subsp. cellulosa)).